A 989-amino-acid polypeptide reads, in one-letter code: Cellulose synthase A catalytic subunit 4 [UDP-forming] (989 aa).

Topologically, residues 1–184 are cytoplasmic; the sequence is MMESGVPPCA…SRIIPISKNK (184 aa). Zn(2+)-binding residues include C9, C12, C20, C23, C28, C31, C43, and C46. The RING-type; degenerate zinc-finger motif lies at 9–47; that stretch reads CAACGDDAHAACRACSYALCKACLDEDAAEGRTTCARCG. Basic residues predominate over residues 138-149; it reads KKEKKASAKKAA. The segment at 138 to 158 is disordered; the sequence is KKEKKASAKKAAAKAQAPPVE. The chain crosses the membrane as a helical span at residues 185–205; the sequence is LTPYRAVIIMRLVVLGLFFHY. The Extracellular segment spans residues 206–213; that stretch reads RITNPVYS. The helical transmembrane segment at 214 to 234 threads the bilayer; it reads AFGLWMTSVICEIWFGFSWIL. The Cytoplasmic portion of the chain corresponds to 235–772; it reads DQFPKWCPIN…INTIVYPFTS (538 aa). The UDP-alpha-D-glucose site is built by S272, K278, E279, and D308. D308 is a catalytic residue. A coiled-coil region spans residues 362-389; that stretch reads VKERRAMKRDYEEYKVRINALVAKAQKT. K449 serves as a coordination point for UDP-alpha-D-glucose. Residues K450 and D474 each contribute to the Mn(2+) site. D688 is an active-site residue. Residues 773-793 form a helical membrane-spanning segment; sequence LPLIAYCCLPAICLLTGKFII. Topologically, residues 794 to 798 are extracellular; it reads PTLSN. A helical membrane pass occupies residues 799-819; sequence AATIWFLGLFISIIVTSVLEL. At 820-835 the chain is on the cytoplasmic side; the sequence is RWSGIGIEDWWRNEQF. A helical membrane pass occupies residues 836-856; it reads WVIGGVSAHLFAVFQGILKMI. Over 857 to 884 the chain is Extracellular; that stretch reads AGLDTNFTVTAKATDDTEFGELYVFKWT. The N-linked (GlcNAc...) asparagine glycan is linked to N862. The chain crosses the membrane as a helical span at residues 885–905; it reads TVLIPPTSILVLNLVGVVAGF. Residues 906-916 are Cytoplasmic-facing; sequence SDALNSGYESW. A helical membrane pass occupies residues 917-937; the sequence is GPLFGKVFFAMWVIMHLYPFL. Topologically, residues 938-946 are extracellular; it reads KGLMGRQNR. The helical transmembrane segment at 947-967 threads the bilayer; sequence TPTIVVLWSVLLASVFSLLWV. Over 968 to 989 the chain is Cytoplasmic; the sequence is KIDPFIGSSETTTTNSCANFDC.

It belongs to the glycosyltransferase 2 family. Plant cellulose synthase subfamily. Mn(2+) serves as cofactor. The cofactor is Zn(2+).

The protein localises to the cell membrane. The enzyme catalyses [(1-&gt;4)-beta-D-glucosyl](n) + UDP-alpha-D-glucose = [(1-&gt;4)-beta-D-glucosyl](n+1) + UDP + H(+). Its pathway is glycan metabolism; plant cellulose biosynthesis. In terms of biological role, catalytic subunit of cellulose synthase terminal complexes ('rosettes'), required for beta-1,4-glucan microfibril crystallization, a major mechanism of the cell wall formation. Involved in the secondary cell wall formation. The sequence is that of Cellulose synthase A catalytic subunit 4 [UDP-forming] (CESA4) from Oryza sativa subsp. japonica (Rice).